The chain runs to 236 residues: Baculoviral IAP repeat-containing protein 8 (236 aa).

Residues 7-70 form a BIR repeat; the sequence is RLITFGTWMY…KWYPGCKYLL (64 aa). Zn(2+) is bound by residues C39, C42, H59, and C66. The RING-type zinc-finger motif lies at 189-224; sequence CKICMDRHIAVVFIPCGHLVTCKQCAEAVDRCPMCS.

This sequence belongs to the IAP family. As to quaternary structure, binds to caspase-9.

Its subcellular location is the cytoplasm. Its function is as follows. Protects against apoptosis mediated by BAX. The protein is Baculoviral IAP repeat-containing protein 8 (BIRC8) of Pan troglodytes (Chimpanzee).